Here is a 200-residue protein sequence, read N- to C-terminus: Lipopolysaccharide core heptose(II)-phosphate phosphatase (200 aa).

Residues 1–25 (MLAFCRSSLKSKKYFIILLALAAIA) form the signal peptide.

It belongs to the phosphoglycerate mutase family. Ais subfamily.

Its subcellular location is the periplasm. The protein operates within bacterial outer membrane biogenesis; lipopolysaccharide metabolism. Functionally, catalyzes the dephosphorylation of heptose(II) of the outer membrane lipopolysaccharide core. In Escherichia coli O6:H1 (strain CFT073 / ATCC 700928 / UPEC), this protein is Lipopolysaccharide core heptose(II)-phosphate phosphatase.